The primary structure comprises 100 residues: NADH-quinone oxidoreductase subunit K (100 aa).

Transmembrane regions (helical) follow at residues Ile2–Val22, Leu28–Val48, and Val60–Leu80.

This sequence belongs to the complex I subunit 4L family. NDH-1 is composed of 13 different subunits. Subunits NuoA, H, J, K, L, M, N constitute the membrane sector of the complex.

The protein resides in the cell inner membrane. The enzyme catalyses a quinone + NADH + 5 H(+)(in) = a quinol + NAD(+) + 4 H(+)(out). Its function is as follows. NDH-1 shuttles electrons from NADH, via FMN and iron-sulfur (Fe-S) centers, to quinones in the respiratory chain. The immediate electron acceptor for the enzyme in this species is believed to be ubiquinone. Couples the redox reaction to proton translocation (for every two electrons transferred, four hydrogen ions are translocated across the cytoplasmic membrane), and thus conserves the redox energy in a proton gradient. The protein is NADH-quinone oxidoreductase subunit K of Erwinia tasmaniensis (strain DSM 17950 / CFBP 7177 / CIP 109463 / NCPPB 4357 / Et1/99).